The following is a 433-amino-acid chain: Cell division protein FtsZ homolog 1, chloroplastic (433 aa).

Residues Met-1–Cys-66 constitute a chloroplast transit peptide. Ser-67 carries the N-acetylserine modification. GTP contacts are provided by residues Gly-83 to Asn-87, Gly-170 to Gly-172, Glu-201, Arg-205, and Asp-249. The tract at residues Gly-399–Phe-433 is disordered. A compositionally biased stretch (low complexity) spans Gln-414–Phe-433.

It belongs to the FtsZ family. As to quaternary structure, aggregates to form a contractile ring-like structure; contraction of the ring was accompanied by an increase in the filament turnover rate. This aggregation is regulated in midchloroplast stroma by MIND1 (repressor) and MINE1 (promoter). Self-interacts and binds to FTSZ2-1 in heteromers to form two morphologically distinct types of filaments, termed type-I (smooth filaments) and type-II (rough filaments), in a GTP-dependent manner. Interacts with ARC3. Part of a complex made of ARC3, ARC6, FTSZ1 and FTSZ2. In pollen grain, restricted to plastids of vegetative cells. Also present in pollen tubes plastids.

The protein resides in the plastid. It is found in the chloroplast stroma. It localises to the chloroplast thylakoid membrane. In terms of biological role, exhibits GTPase activity. Component of the plastid division machinery that forms a contractile ring at the division site. Required for plastid division in a dose-dependent manner. Involved in epidermal plastids division in a MINE1-dependent manner. Involved in blue light-induced chloroplast movements. May regulate thylakoid development. In the vegetative shoot apex, at the shoot apical meristem (SAM), where the proplastid-to-chloroplast transition takes place, contributes equally with FTSZ2-1 in the L2 layer to plastid division. This Arabidopsis thaliana (Mouse-ear cress) protein is Cell division protein FtsZ homolog 1, chloroplastic.